Reading from the N-terminus, the 266-residue chain is GTP cyclohydrolase FolE2 1 (266 aa).

The protein belongs to the GTP cyclohydrolase IV family.

It catalyses the reaction GTP + H2O = 7,8-dihydroneopterin 3'-triphosphate + formate + H(+). It functions in the pathway cofactor biosynthesis; 7,8-dihydroneopterin triphosphate biosynthesis; 7,8-dihydroneopterin triphosphate from GTP: step 1/1. Converts GTP to 7,8-dihydroneopterin triphosphate. This chain is GTP cyclohydrolase FolE2 1, found in Dechloromonas aromatica (strain RCB).